The sequence spans 648 residues: Penicillin-binding protein PbpB (648 aa).

Positions 1–35 (MSRRGDRPRTPAQPRKKARVDQPRSARTRRTRVSE) are disordered. Residues 52–72 (GNLAILAVLVIAAVQLFMLQV) form a helical membrane-spanning segment. Residue serine 355 is the Acyl-ester intermediate of the active site.

This sequence belongs to the transpeptidase family. As to quaternary structure, interacts with Wag31.

The protein resides in the cell membrane. The sequence is that of Penicillin-binding protein PbpB (pbpB) from Mycolicibacterium smegmatis (strain ATCC 700084 / mc(2)155) (Mycobacterium smegmatis).